We begin with the raw amino-acid sequence, 58 residues long: MAGKFEIYKDKSNKFRFRLKAGNGEVIAVGEAYESKAGCLSGIESVRKNAPDAAVVEV.

This sequence belongs to the UPF0339 family.

The chain is UPF0339 protein TDE_0826 from Treponema denticola (strain ATCC 35405 / DSM 14222 / CIP 103919 / JCM 8153 / KCTC 15104).